The chain runs to 129 residues: Glycine cleavage system H protein (129 aa).

The 83-residue stretch at 24–106 folds into the Lipoyl-binding domain; sequence IAVIGITAYA…YGDGWLIKVR (83 aa). An N6-lipoyllysine modification is found at lysine 65.

The protein belongs to the GcvH family. As to quaternary structure, the glycine cleavage system is composed of four proteins: P, T, L and H. The cofactor is (R)-lipoate.

In terms of biological role, the glycine cleavage system catalyzes the degradation of glycine. The H protein shuttles the methylamine group of glycine from the P protein to the T protein. The chain is Glycine cleavage system H protein from Synechococcus sp. (strain JA-2-3B'a(2-13)) (Cyanobacteria bacterium Yellowstone B-Prime).